A 492-amino-acid chain; its full sequence is NADPH:adrenodoxin oxidoreductase, mitochondrial (492 aa).

Residues 1 to 32 (MAPRCWRWWPWSSWTRTRLPPSRSIQNFGQHF) constitute a mitochondrion transit peptide. Positions 49, 70, 78, and 114 each coordinate FAD. NADP(+)-binding positions include 185 to 188 (QGNV), 229 to 230 (RR), and Glu-241. 2 positions are modified to phosphoserine: Ser-311 and Ser-318. FAD contacts are provided by residues Trp-399 and 406–408 (GVI). Position 406 (Gly-406) interacts with NADP(+).

Belongs to the ferredoxin--NADP reductase type 1 family. In terms of assembly, monomer. Interacts directly with FDX1. Requires FAD as cofactor. In terms of tissue distribution, detected in adrenal cortex and corpus luteum (at protein level).

It localises to the mitochondrion inner membrane. The enzyme catalyses 2 reduced [adrenodoxin] + NADP(+) + H(+) = 2 oxidized [adrenodoxin] + NADPH. It carries out the reaction 2 reduced [2Fe-2S]-[ferredoxin] + NADP(+) + H(+) = 2 oxidized [2Fe-2S]-[ferredoxin] + NADPH. Its pathway is steroid metabolism; cholesterol metabolism. Serves as the first electron transfer protein in all the mitochondrial P450 systems including cholesterol side chain cleavage in all steroidogenic tissues, steroid 11-beta hydroxylation in the adrenal cortex, 25-OH-vitamin D3-24 hydroxylation in the kidney, and sterol C-27 hydroxylation in the liver. Also acts as a ferredoxin--NADP(+) reductase essential for coenzyme Q biosynthesis: together with FDX2, transfers the electrons required for the hydroxylation reaction performed by COQ6. The sequence is that of NADPH:adrenodoxin oxidoreductase, mitochondrial (FDXR) from Bos taurus (Bovine).